The following is a 473-amino-acid chain: Ribulose bisphosphate carboxylase large chain 3 (473 aa).

Residues Asn116 and Thr166 each contribute to the substrate site. The active-site Proton acceptor is Lys168. A substrate-binding site is contributed by Lys170. Residues Lys194, Asp196, and Glu197 each contribute to the Mg(2+) site. N6-carboxylysine is present on Lys194. The Proton acceptor role is filled by His287. Arg288, His320, and Ser372 together coordinate substrate.

This sequence belongs to the RuBisCO large chain family. Type I subfamily. Heterohexadecamer of 8 large chains and 8 small chains. Mg(2+) serves as cofactor.

It carries out the reaction 2 (2R)-3-phosphoglycerate + 2 H(+) = D-ribulose 1,5-bisphosphate + CO2 + H2O. It catalyses the reaction D-ribulose 1,5-bisphosphate + O2 = 2-phosphoglycolate + (2R)-3-phosphoglycerate + 2 H(+). RuBisCO catalyzes two reactions: the carboxylation of D-ribulose 1,5-bisphosphate, the primary event in carbon dioxide fixation, as well as the oxidative fragmentation of the pentose substrate. Both reactions occur simultaneously and in competition at the same active site. This is Ribulose bisphosphate carboxylase large chain 3 from Nitrobacter hamburgensis (strain DSM 10229 / NCIMB 13809 / X14).